A 367-amino-acid polypeptide reads, in one-letter code: Homoserine O-acetyltransferase (367 aa).

In terms of domain architecture, AB hydrolase-1 spans 44-350 (NAIMVTHAWT…AYGHDAFLLE (307 aa)). The active-site Nucleophile is the S150. Residue R217 coordinates substrate. Catalysis depends on residues D311 and H344. D345 contributes to the substrate binding site.

Belongs to the AB hydrolase superfamily. MetX family. Homodimer.

The protein resides in the cytoplasm. The catalysed reaction is L-homoserine + acetyl-CoA = O-acetyl-L-homoserine + CoA. The protein operates within amino-acid biosynthesis; L-methionine biosynthesis via de novo pathway; O-acetyl-L-homoserine from L-homoserine: step 1/1. Its function is as follows. Transfers an acetyl group from acetyl-CoA to L-homoserine, forming acetyl-L-homoserine. In Geotalea daltonii (strain DSM 22248 / JCM 15807 / FRC-32) (Geobacter daltonii), this protein is Homoserine O-acetyltransferase.